A 122-amino-acid polypeptide reads, in one-letter code: Small ribosomal subunit protein uS10y (122 aa).

It belongs to the universal ribosomal protein uS10 family.

This is Small ribosomal subunit protein uS10y (RPS20B) from Arabidopsis thaliana (Mouse-ear cress).